Here is a 320-residue protein sequence, read N- to C-terminus: Iminosuccinate reductase (320 aa).

The active-site Proton donor/acceptor is the Lys-67. NAD(+) is bound by residues Arg-110, 137-138 (HQ), Asn-159, Ser-199, 219-222 (MGTD), Lys-226, and Gly-291.

It belongs to the ornithine cyclodeaminase/mu-crystallin family. BhcD subfamily.

The catalysed reaction is L-aspartate + NAD(+) = iminosuccinate + NADH + H(+). Imine reductase that catalyzes the NADH-dependent reduction of iminosuccinate to L-aspartate. Is essential for the growth of P.denitrificans in the presence of glycolate and glyoxylate since it functions in glyoxylate assimilation via the beta-hydroxyaspartate cycle (BHAC). Thereby BhcD regenerates the amino group donor for the first step of the BHAC. The polypeptide is Iminosuccinate reductase (Paracoccus denitrificans (strain Pd 1222)).